The sequence spans 326 residues: Flotillin-like protein FloA (326 aa).

2 consecutive transmembrane segments (helical) span residues 6-26 (IILFFLVVAVIVLFYFVGSSV) and 27-47 (SLWIQALVSGARVGLLNIVFM).

Belongs to the flotillin-like FloA family. As to quaternary structure, homooligomerizes.

Its subcellular location is the cell membrane. It localises to the membrane raft. Found in functional membrane microdomains (FMM) that may be equivalent to eukaryotic membrane rafts. FMMs are highly dynamic and increase in number as cells age. Flotillins are thought to be important factors in membrane fluidity. The protein is Flotillin-like protein FloA of Desulfosudis oleivorans (strain DSM 6200 / JCM 39069 / Hxd3) (Desulfococcus oleovorans).